The chain runs to 561 residues: MNINVADLLNGNYILLLFVVLALGLCLGKLRLGSVQLGNSIGVLVVSLLLGQQHFAINTDALNLGFMLFIFCVGVEAGPNFFSIFFRDGKNYLMLALVMVGSAMLIATVLGKVFGWDIGLTAGMLAGAMTSTPVLVGAGDTLRHFGLPSDQLAQSLDHLSLGYALTYLVGLVSLIVGARYMPKLQHQDLQTSAQQIARERGLDTDSKRKVYLPVIRAYRVGPELVAWADGKNLRELGIYRQTGCYIERIRRNGILANPDGDAVLQMGDDIALVGYPDAHARLDPSFRNGKEVFDRDLLDMRIVTEEIVVKNHNAVGRRLAQLKLTDHGCFLNRVIRSQIEMPIDDNVVLNKGDVLQVSGDARRVKTVADRIGFISIHSQVTDLLAFCAFFIVGLMIGMITFQFSSFSFGIGNAAGLLFAGIMLGFLRANHPTFGYIPQGALNMVKEFGLMVFMAGVGLSAGAGINNGLGAVGGQMLAAGLIVSLLPVVICFLFGAYVLRMNRAMLFGAMMGARTCAPAMEIISDTARSNIPALGYAGTYAIANVLLTLAGTLIVIIWPGLQ.

The next 5 helical transmembrane spans lie at 8–28 (LLNGNYILLLFVVLALGLCLG), 37–57 (LGNSIGVLVVSLLLGQQHFAI), 66–86 (FMLFIFCVGVEAGPNFFSIFF), 94–114 (MLALVMVGSAMLIATVLGKVF), and 158–178 (HLSLGYALTYLVGLVSLIVGA). 2 RCK C-terminal domains span residues 202–288 (LDTD…SFRN) and 292–373 (VFDR…RIGF). A run of 5 helical transmembrane segments spans residues 383-403 (LLAFCAFFIVGLMIGMITFQF), 406-426 (FSFGIGNAAGLLFAGIMLGFL), 447-467 (FGLMVFMAGVGLSAGAGINNG), 478-498 (AGLIVSLLPVVICFLFGAYVL), and 540-560 (AIANVLLTLAGTLIVIIWPGL).

Belongs to the AAE transporter (TC 2.A.81) family. YbjL subfamily.

The protein resides in the cell membrane. The sequence is that of Putative transport protein KPK_3686 from Klebsiella pneumoniae (strain 342).